The sequence spans 301 residues: Aspartate carbamoyltransferase catalytic subunit (301 aa).

The carbamoyl phosphate site is built by Arg54 and Thr55. Residue Lys82 participates in L-aspartate binding. Residues Arg104, His132, and Gln135 each coordinate carbamoyl phosphate. Arg165 and Arg217 together coordinate L-aspartate. Carbamoyl phosphate contacts are provided by Gly257 and Pro258.

The protein belongs to the aspartate/ornithine carbamoyltransferase superfamily. ATCase family. In terms of assembly, heterododecamer (2C3:3R2) of six catalytic PyrB chains organized as two trimers (C3), and six regulatory PyrI chains organized as three dimers (R2).

The enzyme catalyses carbamoyl phosphate + L-aspartate = N-carbamoyl-L-aspartate + phosphate + H(+). The protein operates within pyrimidine metabolism; UMP biosynthesis via de novo pathway; (S)-dihydroorotate from bicarbonate: step 2/3. In terms of biological role, catalyzes the condensation of carbamoyl phosphate and aspartate to form carbamoyl aspartate and inorganic phosphate, the committed step in the de novo pyrimidine nucleotide biosynthesis pathway. In Thermus aquaticus, this protein is Aspartate carbamoyltransferase catalytic subunit.